A 381-amino-acid polypeptide reads, in one-letter code: Short-chain dehydrogenase anuD (381 aa).

Residues isoleucine 84, lysine 109, aspartate 133, asparagine 158, tyrosine 244, and lysine 248 each contribute to the NADP(+) site. Residue tyrosine 244 is the Proton acceptor of the active site. Tyrosine 244 serves as the catalytic Proton donor. The active-site Lowers pKa of active site Tyr is lysine 248.

The protein belongs to the short-chain dehydrogenases/reductases (SDR) family.

Functionally, highly reducing polyketide synthase; part of the gene cluster that mediates the biosynthesis of annullatin D, an alkylated aromatic polyketide with a fused dihydrobenzofuran lactone ring system that exhibits potent agonistic activities toward the cannabinoid receptors. AnuD does not seem to play a role within the pathway. The annullatin backbone 2-hydroxymethyl-3-pentylphenol is assembled from one acetyl-CoA starter unit and 5 malonyl-CoA elongation units by cooperation of the highly reducing polyketide synthase anuA, the short-chain dehydrogenase anuB and the oxidoreductase anuC, before being hydroxylated at the C-5 alkyl chain by the cytochrome P450 monooxygenase anuE to form (8S)-annullatin E. The prenyltransferase anuH subsequently installs one isoprenyl group at the benzene ring to form (8S)-annullatin J. Enzymatic or nonenzymatic dihydro-benzofuran ring formation between the prenyl and the phenolic hydroxyl groups in (8S)-annullatin J results in two diastereomers (2S,9S)-annullatin H and compound 12. The intermediate (2S,9S)-annullatin H is then converted to (2S,9S)-annullatin D by the FAD-linked oxidoreductase anuG-catalyzed five-member lactone ring formation. The isomer 12 acts as a substrate for the short-chain dehydrogenase anuF and is oxidized to (2R)-annullatin F, which is subsequently acetylated by an acetyltransferase leading to (2R)-annullatin G formation. The remaining enzymes identified within the cluster, anuD, anuI and anuJ, seem not to be involved in annullatin biosynthesis. The polypeptide is Short-chain dehydrogenase anuD (Penicillium roqueforti (strain FM164)).